Reading from the N-terminus, the 270-residue chain is 2-aminoethanethiol dioxygenase (270 aa).

The disordered stretch occupies residues 21–48 (FRGSGGGRGASDRDAASGPEAPMQPGFP). Fe cation is bound by residues His-112 and His-114. The segment at 140–164 (GGQRPRALPPEQQFEPPLQPREREA) is disordered. His-193 contributes to the Fe cation binding site. The 3'-(S-cysteinyl)-tyrosine (Cys-Tyr) cross-link spans 220–223 (CHYY).

As to quaternary structure, monomer. Fe cation is required as a cofactor.

The catalysed reaction is cysteamine + O2 = hypotaurine + H(+). It carries out the reaction N-terminal L-cysteinyl-[protein] + O2 = N-terminal S-hydroxy-S-oxy-L-cysteinyl-[protein] + H(+). In terms of biological role, plays a vital role in regulating thiol metabolism and preserving oxygen homeostasis by oxidizing the sulfur of cysteamine and N-terminal cysteine-containing proteins to their corresponding sulfinic acids using O2 as a cosubstrate. Catalyzes the oxidation of cysteamine (2-aminoethanethiol) to hypotaurine. Catalyzes the oxidation of regulators of G-protein signaling 4 (RGS4) and 5 (RGS5) and interleukin-32 (IL32). The polypeptide is 2-aminoethanethiol dioxygenase (ADO) (Homo sapiens (Human)).